Here is a 78-residue protein sequence, read N- to C-terminus: Rubredoxin (78 aa).

Residues 23–74 form the Rubredoxin-like domain; the sequence is DARLECKICWWEYDPEVGDPVWQIAPGTSFSALPAHWRCPNCDGEAEQFMVL. The Fe cation site is built by Cys28, Cys31, Cys61, and Cys64.

Belongs to the rubredoxin family. The cofactor is Fe(3+).

Functionally, rubredoxin is a small nonheme, iron protein lacking acid-labile sulfide. Its single Fe, chelated to 4 Cys, functions as an electron acceptor and may also stabilize the conformation of the molecule. Could be involved in hydrogenase-linked redox processes. This Cupriavidus necator (strain ATCC 17699 / DSM 428 / KCTC 22496 / NCIMB 10442 / H16 / Stanier 337) (Ralstonia eutropha) protein is Rubredoxin (hoxR).